The following is a 1164-amino-acid chain: Auxin response factor 7 (1164 aa).

Positions 127–229 (FCKTLTASDT…QLLLGIRRAN (103 aa)) form a DNA-binding region, TF-B3. Disordered regions lie at residues 451–505 (HNNL…QQQL), 536–555 (QQLQSQQHSNNNQSQSQQQQ), 570–728 (HQQP…LLQQ), 765–858 (FLSP…SSSG), and 903–930 (KSKASLTDHQLEASASGTSYGLDGGENN). A compositionally biased stretch (polar residues) spans 464-489 (LSFQTPHGGISSSNLQFNKQNQQAPM). Residues 570 to 635 (HQQPLQQQTQ…SQQASTHHLQ (66 aa)) show a composition bias toward low complexity. Positions 637–651 (QLVSGSMASSVITPP) are enriched in polar residues. The span at 652–671 (SSSLNQSFQQQQQQSKQLQQ) shows a compositional bias: low complexity. Positions 678 to 710 (ASTSQSSVIETSKSSSNLMSAPPQETQFSRQVE) are enriched in polar residues. Low complexity-rich tracts occupy residues 711–728 (QQQPPGLNGQNQQTLLQQ) and 765–790 (FLSPQSQLPHHQLQSQQLQQLPTLSQ). The span at 791–808 (GHQFPSSCTNNGLSTLQP) shows a compositional bias: polar residues. Over residues 841-851 (PSSSTSPSTNN) the composition is skewed to low complexity. Positions 903–921 (KSKASLTDHQLEASASGTS) are enriched in polar residues. The 94-residue stretch at 1037 to 1130 (RTYTKVQKRG…EVQQMSLDGN (94 aa)) folds into the PB1 domain. Positions 1145 to 1164 (DSGNAWRGHYDDNSATSFNR) are disordered.

This sequence belongs to the ARF family. In terms of assembly, homodimers and heterodimers. Interacts with the auxin-responsive proteins IAA1 and IAA12 (BODENLOS). Interacts (via PB1 domain) with IAA17 (via PB1 domain). Interacts with IAA19. Interacts with ARF5. Binds to JMJ30. Binds to ATXR2 in the nucleus. Expressed in the whole plant.

It localises to the nucleus. Functionally, auxin response factors (ARFs) are transcriptional factors that bind specifically to the DNA sequence 5'-TGTCTC-3' found in the auxin-responsive promoter elements (AuxREs). Acts as a transcriptional activator of several tropic stimulus-induced (TSI) genes, including SAUR50. Formation of heterodimers with Aux/IAA proteins may alter their ability to modulate early auxin response genes expression. Required for differential growth responses of aerial tissues. Involved in ethylene responses. Regulates lateral root formation through direct regulation of LBD16 and/or LBD29. Functionally redundant with ARF19. Mediates embryo axis formation and vascular tissues differentiation. Functionally redundant with ARF5. Involved in cellular dedifferentiation during callus formation on callus-inducing medium (CIM) and in an ATXR2-dependent manner. This chain is Auxin response factor 7, found in Arabidopsis thaliana (Mouse-ear cress).